The sequence spans 206 residues: Protein GET1 (206 aa).

Residues 1–4 (MPSL) are Lumenal-facing. The chain crosses the membrane as a helical span at residues 5–24 (LITVLFLNVIIYVINTVGAA). Residues 25–110 (TVDGLLWLLY…TFDMTIKIAR (86 aa)) lie on the Cytoplasmic side of the membrane. Residues 75-100 (AKLRRRHDKAMEAYEAKNNELTQSKS) are a coiled coil. Residues 111–131 (WAATSGLMLFLQFWYSKTPIF) traverse the membrane as a helical segment. The Lumenal portion of the chain corresponds to 132-155 (TLPPGWIPWQVQWVLSFPRAPMGT). A helical transmembrane segment spans residues 156 to 172 (VSIQIWGGACATVVALV). Residues 173–206 (GDAMRASLAYVSKPKIDRIKLGATMEGKEGKKRQ) lie on the Cytoplasmic side of the membrane.

Belongs to the WRB/GET1 family. As to quaternary structure, interacts with GET3.

The protein resides in the endoplasmic reticulum membrane. Its function is as follows. Required for the post-translational delivery of tail-anchored (TA) proteins to the endoplasmic reticulum. Acts as a membrane receptor for soluble GET3, which recognizes and selectively binds the transmembrane domain of TA proteins in the cytosol. The chain is Protein GET1 from Ajellomyces capsulatus (strain NAm1 / WU24) (Darling's disease fungus).